Reading from the N-terminus, the 245-residue chain is Bis(5'-nucleosyl)-tetraphosphatase PrpE [asymmetrical] (245 aa).

The protein belongs to the PrpE family. Requires Ni(2+) as cofactor.

It catalyses the reaction P(1),P(4)-bis(5'-guanosyl) tetraphosphate + H2O = GMP + GTP + 2 H(+). Functionally, asymmetrically hydrolyzes Ap4p to yield AMP and ATP. This chain is Bis(5'-nucleosyl)-tetraphosphatase PrpE [asymmetrical], found in Geobacillus sp. (strain WCH70).